A 380-amino-acid polypeptide reads, in one-letter code: MANIRKTHPLLKIINGAVIDLPTPSNISAWWNFGSLLGLCLITQTLTGLFLAMHYTADITLAFSSVAHICRDVNYGWLLRNIHANGASFFFICIYLHIARGLYYGSYLYKETWNIGVLLLLLVMMTAFVGYVLPWGQMSFWGATVITNLLSAFPYIGDTLVQWIWGGFSVDNATLTRFFTFHFLLPFIIMGTTMLHLLFLHETGSNNPTGLDSDADKVTFHPYFSYKDLLGFTILLATLSALALLNPNLLGDPENFTPANPLVTPPHIKPEWYFLFAYAILRSIPNKLGGVLALLFSILILVVVPTLHTSKQRSNTFRPSSQTLFWILVANMLVLTWIGGQPVEHPFIIIGQVASVLYFMLFLFFIPLSGWLENKILDWA.

The next 4 membrane-spanning stretches (helical) occupy residues F33–M53, W77–I98, W113–L133, and F178–L198. H83 and H97 together coordinate heme b. Heme b is bound by residues H182 and H196. H201 lines the a ubiquinone pocket. The next 4 helical transmembrane spans lie at Y226–N246, L288–H308, S320–G340, and F347–P367.

It belongs to the cytochrome b family. The cytochrome bc1 complex contains 3 respiratory subunits (MT-CYB, CYC1 and UQCRFS1), 2 core proteins (UQCRC1 and UQCRC2) and probably 6 low-molecular weight proteins. The cofactor is heme b.

The protein localises to the mitochondrion inner membrane. Component of the ubiquinol-cytochrome c reductase complex (complex III or cytochrome b-c1 complex) that is part of the mitochondrial respiratory chain. The b-c1 complex mediates electron transfer from ubiquinol to cytochrome c. Contributes to the generation of a proton gradient across the mitochondrial membrane that is then used for ATP synthesis. This Lepisosteus oculatus (Spotted gar) protein is Cytochrome b (mt-cyb).